The primary structure comprises 105 residues: Small ribosomal subunit protein uS10 (105 aa).

It belongs to the universal ribosomal protein uS10 family. In terms of assembly, part of the 30S ribosomal subunit.

Functionally, involved in the binding of tRNA to the ribosomes. This is Small ribosomal subunit protein uS10 from Rickettsia conorii (strain ATCC VR-613 / Malish 7).